Reading from the N-terminus, the 699-residue chain is Polyribonucleotide nucleotidyltransferase (699 aa).

Positions 485 and 491 each coordinate Mg(2+). A KH domain is found at proline 552–isoleucine 611. One can recognise an S1 motif domain in the interval glycine 621–lysine 689.

The protein belongs to the polyribonucleotide nucleotidyltransferase family. Component of the RNA degradosome, which is a multiprotein complex involved in RNA processing and mRNA degradation. The cofactor is Mg(2+).

Its subcellular location is the cytoplasm. The enzyme catalyses RNA(n+1) + phosphate = RNA(n) + a ribonucleoside 5'-diphosphate. Its function is as follows. Involved in mRNA degradation. Catalyzes the phosphorolysis of single-stranded polyribonucleotides processively in the 3'- to 5'-direction. The sequence is that of Polyribonucleotide nucleotidyltransferase from Shewanella oneidensis (strain ATCC 700550 / JCM 31522 / CIP 106686 / LMG 19005 / NCIMB 14063 / MR-1).